The chain runs to 234 residues: Viral Fc-gamma receptor-like protein IR11 (234 aa).

The signal sequence occupies residues 1–23 (MQTYSTPLTLVIVTSLFLFTTQG). In terms of domain architecture, Ig-like V-type spans 24–122 (SSSNAVEPTK…VKDTGVYLLQ (99 aa)). Residues 24 to 182 (SSSNAVEPTK…DLKRQWSGLS (159 aa)) lie on the Extracellular side of the membrane. 3 N-linked (GlcNAc...) asparagine; by host glycosylation sites follow: Asn-57, Asn-105, and Asn-110. A helical membrane pass occupies residues 183–203 (LHCAWVSGMMIFVGALVICFL). Over 204–234 (RSQRIGEQDAEHLRTDLDTEPLLLTVDGDLQ) the chain is Cytoplasmic.

This sequence belongs to the RL11 family.

The protein localises to the membrane. In Homo sapiens (Human), this protein is Viral Fc-gamma receptor-like protein IR11.